Consider the following 506-residue polypeptide: Carboxyl-terminal PDZ ligand of neuronal nitric oxide synthase protein (506 aa).

In terms of domain architecture, PID spans 26-196; it reads FQHGICFEAK…ESERNSNSSG (171 aa). Disordered regions lie at residues 175-224 and 241-260; these read HTQQ…VEVP and DAVGKEGGSHTGSKVSHPQE. S188, S192, and S195 each carry phosphoserine. The segment covering 203–213 has biased composition (low complexity); it reads TGAERASTATA. Position 266 is a phosphoserine (S266). Residues 322–363 are a coiled coil; the sequence is AAEAAARLEAQARVHQLLLQNKDMLQHISLLVKQVQELELKL. Phosphoserine is present on residues S371, S374, S401, and S417. An interaction with NOS1 region spans residues 494–506; the sequence is QELGDGLDDEIAV. The PDZ-binding motif lies at 504–506; it reads IAV.

As to quaternary structure, interacts with the PDZ domain of NOS1 or the second PDZ domain of DLG4 through its C-terminus. Interacts with RASD1 and SYN1, SYN2 and SYN3 via its PID domain. Forms a ternary complex with NOS1 and RASD1. Forms a ternary complex with NOS1 and SYN1. As to expression, expressed in kidney glomeruli podocytes.

It is found in the cell projection. It localises to the filopodium. The protein localises to the podosome. Its function is as follows. Adapter protein involved in neuronal nitric-oxide (NO) synthesis regulation via its association with nNOS/NOS1. The complex formed with NOS1 and synapsins is necessary for specific NO and synapsin functions at a presynaptic level. Mediates an indirect interaction between NOS1 and RASD1 leading to enhance the ability of NOS1 to activate RASD1. Competes with DLG4 for interaction with NOS1, possibly affecting NOS1 activity by regulating the interaction between NOS1 and DLG4. In kidney podocytes, plays a role in podosomes and filopodia formation through CDC42 activation. The chain is Carboxyl-terminal PDZ ligand of neuronal nitric oxide synthase protein from Homo sapiens (Human).